Reading from the N-terminus, the 158-residue chain is Protein OPG060 (158 aa).

The protein belongs to the orthopoxvirus OPG058 family.

The sequence is that of Protein OPG060 (OPG060) from Homo sapiens (Human).